The sequence spans 353 residues: Photosystem II D2 protein (353 aa).

T2 bears the N-acetylthreonine mark. T2 is modified (phosphothreonine). A helical membrane pass occupies residues 41-61 (CAYFALGGWFTGTTFVTSWYT). H118 contributes to the chlorophyll a binding site. A helical transmembrane segment spans residues 125 to 141 (GFMLRQFELARSVQLRP). Residues Q130 and N143 each contribute to the pheophytin a site. Residues 153 to 166 (VFVSVFLIYPLGQS) form a helical membrane-spanning segment. Chlorophyll a is bound at residue H198. Residues 208 to 228 (AALLCAIHGATVENTLFEDGD) form a helical membrane-spanning segment. H215 and F262 together coordinate a plastoquinone. H215 provides a ligand contact to Fe cation. H269 provides a ligand contact to Fe cation. Residues 279-295 (GLWMSAIGVVGLALNLR) traverse the membrane as a helical segment.

The protein belongs to the reaction center PufL/M/PsbA/D family. In terms of assembly, PSII is composed of 1 copy each of membrane proteins PsbA, PsbB, PsbC, PsbD, PsbE, PsbF, PsbH, PsbI, PsbJ, PsbK, PsbL, PsbM, PsbT, PsbX, PsbY, PsbZ, Psb30/Ycf12, at least 3 peripheral proteins of the oxygen-evolving complex and a large number of cofactors. It forms dimeric complexes. Requires The D1/D2 heterodimer binds P680, chlorophylls that are the primary electron donor of PSII, and subsequent electron acceptors. It shares a non-heme iron and each subunit binds pheophytin, quinone, additional chlorophylls, carotenoids and lipids. There is also a Cl(-1) ion associated with D1 and D2, which is required for oxygen evolution. The PSII complex binds additional chlorophylls, carotenoids and specific lipids. as cofactor. Phosphorylated on threonine residue(s); phosphorylation increases with increasing light levels.

Its subcellular location is the plastid. The protein localises to the chloroplast thylakoid membrane. The catalysed reaction is 2 a plastoquinone + 4 hnu + 2 H2O = 2 a plastoquinol + O2. In terms of biological role, photosystem II (PSII) is a light-driven water:plastoquinone oxidoreductase that uses light energy to abstract electrons from H(2)O, generating O(2) and a proton gradient subsequently used for ATP formation. It consists of a core antenna complex that captures photons, and an electron transfer chain that converts photonic excitation into a charge separation. The D1/D2 (PsbA/PsbD) reaction center heterodimer binds P680, the primary electron donor of PSII as well as several subsequent electron acceptors. D2 is needed for assembly of a stable PSII complex. In Marchantia polymorpha (Common liverwort), this protein is Photosystem II D2 protein.